A 366-amino-acid chain; its full sequence is Chorismate synthase (366 aa).

Positions 48 and 54 each coordinate NADP(+). Residues 125–127 (RSS), 241–242 (NA), G285, 300–304 (KPTSS), and R326 contribute to the FMN site.

It belongs to the chorismate synthase family. Homotetramer. Requires FMNH2 as cofactor.

The enzyme catalyses 5-O-(1-carboxyvinyl)-3-phosphoshikimate = chorismate + phosphate. It functions in the pathway metabolic intermediate biosynthesis; chorismate biosynthesis; chorismate from D-erythrose 4-phosphate and phosphoenolpyruvate: step 7/7. In terms of biological role, catalyzes the anti-1,4-elimination of the C-3 phosphate and the C-6 proR hydrogen from 5-enolpyruvylshikimate-3-phosphate (EPSP) to yield chorismate, which is the branch point compound that serves as the starting substrate for the three terminal pathways of aromatic amino acid biosynthesis. This reaction introduces a second double bond into the aromatic ring system. This is Chorismate synthase from Cereibacter sphaeroides (strain ATCC 17023 / DSM 158 / JCM 6121 / CCUG 31486 / LMG 2827 / NBRC 12203 / NCIMB 8253 / ATH 2.4.1.) (Rhodobacter sphaeroides).